The primary structure comprises 300 residues: MSTGNAATRGSAHFGTISLAMVTPFKKDGSIDLDAGVALAGHFVDEGCDSLVLAGTTGESPTTGATEKLDLLRAVRSELGDSVKLIAGSGSYDTAVTVEMSRASQEAGADSLLVVTPYYSRPSQEGIYQHFTTVADAVDIPVCVYDIPSRSVVPVEPETLHRLADHPQIAAVKDAKGDLAAGMELIENTDLAWYSGDDPLNLPWLAAGATGFISVIGHVATRQLKQLRDAFDAGDIATARSIAVQLQPLQKAQARLGGVTFAKAALKLKGKDVGAPRLPIIEPTAAEMDQLAQDLQAAGV.

Position 57 (Thr57) interacts with pyruvate. The active-site Proton donor/acceptor is the Tyr145. The active-site Schiff-base intermediate with substrate is Lys173. Ile213 is a binding site for pyruvate.

The protein belongs to the DapA family. Homotetramer; dimer of dimers.

It localises to the cytoplasm. The enzyme catalyses L-aspartate 4-semialdehyde + pyruvate = (2S,4S)-4-hydroxy-2,3,4,5-tetrahydrodipicolinate + H2O + H(+). It functions in the pathway amino-acid biosynthesis; L-lysine biosynthesis via DAP pathway; (S)-tetrahydrodipicolinate from L-aspartate: step 3/4. Functionally, catalyzes the condensation of (S)-aspartate-beta-semialdehyde [(S)-ASA] and pyruvate to 4-hydroxy-tetrahydrodipicolinate (HTPA). This is 4-hydroxy-tetrahydrodipicolinate synthase from Corynebacterium jeikeium (strain K411).